Here is a 43-residue protein sequence, read N- to C-terminus: Protein PsbN (43 aa).

A helical membrane pass occupies residues 7-27 (LSIGIAVVVIAVTGFSIYTAF).

The protein belongs to the PsbN family.

It is found in the cellular thylakoid membrane. In terms of biological role, may play a role in photosystem I and II biogenesis. The chain is Protein PsbN from Picosynechococcus sp. (strain ATCC 27264 / PCC 7002 / PR-6) (Agmenellum quadruplicatum).